The primary structure comprises 492 residues: Catalase isozyme A (492 aa).

Residues 1–23 (MDPCKFRPSSSFDTKTTTTNAGA) are disordered. The segment covering 8–21 (PSSSFDTKTTTTNA) has biased composition (polar residues). Residues His-65 and Asn-138 contribute to the active site. A heme-binding site is contributed by Tyr-348.

Belongs to the catalase family. Homotetramer. The cofactor is heme.

Its subcellular location is the peroxisome. The protein resides in the glyoxysome. It catalyses the reaction 2 H2O2 = O2 + 2 H2O. In terms of biological role, occurs in almost all aerobically respiring organisms and serves to protect cells from the toxic effects of hydrogen peroxide. The chain is Catalase isozyme A from Oryza sativa subsp. indica (Rice).